Here is a 397-residue protein sequence, read N- to C-terminus: Lysosomal acid lipase/cholesteryl ester hydrolase (397 aa).

The N-terminal stretch at 1–25 (MQLLGRVICFVVGILLSGGPTGTIS) is a signal peptide. Residues 26-72 (AVDPEANMNVTEIIMHWGYPEHSVQTGDGYILGVHRIPHGRKNQFDK) constitute a propeptide, removed in mature form. 3 N-linked (GlcNAc...) asparagine glycosylation sites follow: N34, N99, and N159. In terms of domain architecture, AB hydrolase-1 spans 84 to 378 (HGFLADSSNW…EWDHLDFIWG (295 aa)). S172 (charge relay system) is an active-site residue. 2 N-linked (GlcNAc...) asparagine glycosylation sites follow: N271 and N319. The active-site Charge relay system is the H372.

This sequence belongs to the AB hydrolase superfamily. Lipase family. As to quaternary structure, monomer. In terms of processing, glycosylation is not essential for catalytic activity.

The protein resides in the lysosome. It carries out the reaction a sterol ester + H2O = a sterol + a fatty acid + H(+). It catalyses the reaction cholesteryl (9Z-octadecenoate) + H2O = cholesterol + (9Z)-octadecenoate + H(+). The enzyme catalyses a triacylglycerol + H2O = a 1,2-diacylglycerol + a fatty acid + H(+). The catalysed reaction is 1,2-di-(9Z-octadecenoyl)-glycerol + (9Z)-octadecenoate + H(+) = 1,2,3-tri-(9Z-octadecenoyl)-glycerol + H2O. It carries out the reaction a 1,2-diacylglycerol + H2O = a 1-acylglycerol + a fatty acid + H(+). It catalyses the reaction 1,2-di-(9Z-octadecenoyl)-glycerol + H2O = 1-(9Z-octadecenoyl)-glycerol + (9Z)-octadecenoate + H(+). The enzyme catalyses a 1,3-diacylglycerol + H2O = a 1-acylglycerol + a fatty acid + H(+). The catalysed reaction is 1,3-di-(9Z-octadecenoyl)-glycerol + H2O = 1-(9Z-octadecenoyl)-glycerol + (9Z)-octadecenoate + H(+). Its function is as follows. Catalyzes the deacylation of cholesteryl ester core lipids of endocytosed low density lipoproteins to generate free fatty acids and cholesterol. Hydrolyzes triglycerides (1,2,3-triacylglycerol) and diglycerides (such as 1,2-diacylglycerol and 1,3-diacylglycerol) with preference for the acyl moieties at the sn-1 or sn-3 positions. This is Lysosomal acid lipase/cholesteryl ester hydrolase (Lipa) from Rattus norvegicus (Rat).